The primary structure comprises 438 residues: Proline--tRNA ligase (438 aa).

This sequence belongs to the class-II aminoacyl-tRNA synthetase family. ProS type 2 subfamily. In terms of assembly, homodimer.

The protein localises to the cytoplasm. It carries out the reaction tRNA(Pro) + L-proline + ATP = L-prolyl-tRNA(Pro) + AMP + diphosphate. Catalyzes the attachment of proline to tRNA(Pro) in a two-step reaction: proline is first activated by ATP to form Pro-AMP and then transferred to the acceptor end of tRNA(Pro). The protein is Proline--tRNA ligase of Rickettsia canadensis (strain McKiel).